The following is a 1403-amino-acid chain: E3 ubiquitin-protein ligase SNT2 (1403 aa).

The segment at 40–62 is disordered; that stretch reads SGAKTKGSNSQTPRNCKRTSNPA. The segment covering 45 to 62 has biased composition (polar residues); sequence KGSNSQTPRNCKRTSNPA. A BAH domain is found at 121–258; it reads VLLSANDTIY…RYTLKYYKVY (138 aa). The PHD-type 1 zinc-finger motif lies at 317–369; sequence DKRCQFCKEWCIQKESLSCDECGVCAHLYCMDPPLDRKPNKDVVWTCFSCLQK. The region spanning 555-606 is the SANT domain; that stretch reads LKEPSFTAVEIRKFEEAVEKFGSELRPVCEYVGTQPMSMIVRFYYNWKKTER. The PHD-type 2 zinc finger occupies 1038–1097; the sequence is RTFCSVCKEKFNDNDNYEVVCGNCGLTVHYFCYAIKLPKDMKKNTNLKTFKWLCDPCSND. The RING-type; degenerate zinc-finger motif lies at 1041-1095; sequence CSVCKEKFNDNDNYEVVCGNCGLTVHYFCYAIKLPKDMKKNTNLKTFKWLCDPCS. The C2HC pre-PHD-type zinc finger occupies 1105-1153; the sequence is TYQCSMCPTKDYDYDRYRSQSFKICPDALKCTSLGTWVHLVCSLFNEDI. A PHD-type 3; degenerate zinc finger spans residues 1177 to 1231; the sequence is FTCGVCRINGGGLVKCNKCQYRYHITCAQNSSNFKLMFEKKNMSVDTTLPCIKDV.

Component of the Snt2C complex composed of SNT2, ECM5 and RPD3. Interacts with the E2 ubiquitin-conjugating enzyme UBC4 and histones H3 and H4. Binding is enhanced to methylated histone H3K36me3.

The protein localises to the cytoplasm. Its subcellular location is the nucleus. It catalyses the reaction S-ubiquitinyl-[E2 ubiquitin-conjugating enzyme]-L-cysteine + [acceptor protein]-L-lysine = [E2 ubiquitin-conjugating enzyme]-L-cysteine + N(6)-ubiquitinyl-[acceptor protein]-L-lysine.. Transcriptional regulator that, together with ECM5, recruits histone deacetylase RPD3 to a small number of promoters of stress-response genes in response to oxidative stress. Probable ubiquitin-protein ligase involved in the degradation-related ubiquitination of histones. Contributes to the post-translational regulation of histone protein levels by polyubiquitination of excess histones for subsequent degradation. The polypeptide is E3 ubiquitin-protein ligase SNT2 (Saccharomyces cerevisiae (strain ATCC 204508 / S288c) (Baker's yeast)).